The sequence spans 156 residues: MAMAMRLPAISRAVTEVASAPVGLRRLFCSNASRFSFLSPQAESQTPARPQAEPSTNLFVSGLSKRTTSEGLRTAFAQFGEVADAKVVTDRVSGYSKGFGFVRYATLEDSAKGIAGMDGKFLDGWVIFAEYARPREQSQSYQPQNNMSRPPYYGNR.

A mitochondrion-targeting transit peptide spans 1 to 28 (MAMAMRLPAISRAVTEVASAPVGLRRLF). Residues 56–134 (TNLFVSGLSK…WVIFAEYARP (79 aa)) enclose the RRM domain. Ser-64 is subject to Phosphoserine. Residues 137 to 148 (QSQSYQPQNNMS) are compositionally biased toward polar residues. The tract at residues 137–156 (QSQSYQPQNNMSRPPYYGNR) is disordered.

In terms of assembly, interacts with RBG3/ORRM3. Binds to RBG2/ORRM5.

The protein localises to the mitochondrion. In terms of biological role, involved in C-to-U editing of mitochondrial RNA. Functions as minor mitochondrial editing factor. Controls 6 percent of the mitochondrial editing sites. In Arabidopsis thaliana (Mouse-ear cress), this protein is Organelle RRM domain-containing protein 2, mitochondrial.